The primary structure comprises 188 residues: Ribose 1,5-bisphosphate phosphokinase PhnN (188 aa).

Residue 9–16 (GPSGAGKD) coordinates ATP.

The protein belongs to the ribose 1,5-bisphosphokinase family.

It carries out the reaction alpha-D-ribose 1,5-bisphosphate + ATP = 5-phospho-alpha-D-ribose 1-diphosphate + ADP. The protein operates within metabolic intermediate biosynthesis; 5-phospho-alpha-D-ribose 1-diphosphate biosynthesis; 5-phospho-alpha-D-ribose 1-diphosphate from D-ribose 5-phosphate (route II): step 3/3. Catalyzes the phosphorylation of ribose 1,5-bisphosphate to 5-phospho-D-ribosyl alpha-1-diphosphate (PRPP). The sequence is that of Ribose 1,5-bisphosphate phosphokinase PhnN from Pectobacterium atrosepticum (strain SCRI 1043 / ATCC BAA-672) (Erwinia carotovora subsp. atroseptica).